Consider the following 181-residue polypeptide: Large ribosomal subunit protein uL5 (181 aa).

The protein belongs to the universal ribosomal protein uL5 family. In terms of assembly, part of the 50S ribosomal subunit; part of the 5S rRNA/L5/L18/L25 subcomplex. Contacts the 5S rRNA and the P site tRNA. Forms a bridge to the 30S subunit in the 70S ribosome.

Functionally, this is one of the proteins that bind and probably mediate the attachment of the 5S RNA into the large ribosomal subunit, where it forms part of the central protuberance. In the 70S ribosome it contacts protein S13 of the 30S subunit (bridge B1b), connecting the 2 subunits; this bridge is implicated in subunit movement. Contacts the P site tRNA; the 5S rRNA and some of its associated proteins might help stabilize positioning of ribosome-bound tRNAs. This chain is Large ribosomal subunit protein uL5, found in Helicobacter pylori (strain HPAG1).